The chain runs to 186 residues: Elongation factor P (186 aa).

Belongs to the elongation factor P family.

It is found in the cytoplasm. It functions in the pathway protein biosynthesis; polypeptide chain elongation. In terms of biological role, involved in peptide bond synthesis. Stimulates efficient translation and peptide-bond synthesis on native or reconstituted 70S ribosomes in vitro. Probably functions indirectly by altering the affinity of the ribosome for aminoacyl-tRNA, thus increasing their reactivity as acceptors for peptidyl transferase. In Shewanella piezotolerans (strain WP3 / JCM 13877), this protein is Elongation factor P.